Reading from the N-terminus, the 331-residue chain is Trans-O-hydroxybenzylidenepyruvate hydratase-aldolase (331 aa).

The protein belongs to the DapA family.

It catalyses the reaction (3E)-4-(2-hydroxyphenyl)-2-oxobut-3-enoate + H2O = salicylaldehyde + pyruvate. It participates in aromatic compound metabolism; naphthalene degradation. In terms of biological role, involved in the naphthalene upper catabolic pathway. Catalyzes the transformation of trans-O-hydroxybenzylidenepyruvate (THBPA) to salicylaldehyde and pyruvate. The reaction is reversible. Can also use substrate which carry trans-alpha,beta-unsaturated keto acid side chain and adjacent hydroxyl group such as trans-4-(3-hydroxy-2-thianaphthenyl)-2-oxo-but-3-enoate, trans-4-(3-hydroxy-2-benzofuranyl)-2-oxobut-3-enoate, and trans-4-(3-hydroxy-2-thienyl)-2-oxobut-3-enoate. The chain is Trans-O-hydroxybenzylidenepyruvate hydratase-aldolase (nahE) from Pseudomonas putida (Arthrobacter siderocapsulatus).